Reading from the N-terminus, the 466-residue chain is Cytochrome P450 85A1 (466 aa).

The chain crosses the membrane as a helical span at residues 1–21; it reads MVLAVLIGVLVGIVLVSSLLL. C416 is a binding site for heme.

Belongs to the cytochrome P450 family. Requires heme as cofactor.

The protein resides in the membrane. The catalysed reaction is 6-deoxoteasterone + reduced [NADPH--hemoprotein reductase] + O2 = 6alpha-hydroxyteasterone + oxidized [NADPH--hemoprotein reductase] + H2O + H(+). It carries out the reaction 6alpha-hydroxytyphasterol + reduced [NADPH--hemoprotein reductase] + O2 = teasterone + oxidized [NADPH--hemoprotein reductase] + 2 H2O + H(+). The enzyme catalyses 3-dehydro-6-deoxoteasterone + reduced [NADPH--hemoprotein reductase] + O2 = 3-dehydro-6alpha-hydroxyteasterone + oxidized [NADPH--hemoprotein reductase] + H2O + H(+). It catalyses the reaction 3-dehydro-6alpha-hydroxyteasterone + reduced [NADPH--hemoprotein reductase] + O2 = 3-dehydroteasterone + oxidized [NADPH--hemoprotein reductase] + 2 H2O + H(+). The catalysed reaction is 6-deoxotyphasterol + reduced [NADPH--hemoprotein reductase] + O2 = 6alpha-hydroxytyphasterol + oxidized [NADPH--hemoprotein reductase] + H2O + H(+). It carries out the reaction 6alpha-hydroxytyphasterol + reduced [NADPH--hemoprotein reductase] + O2 = typhasterol + oxidized [NADPH--hemoprotein reductase] + 2 H2O + H(+). The enzyme catalyses 6-deoxocastasterone + reduced [NADPH--hemoprotein reductase] + O2 = 6alpha-hydroxycastasterone + oxidized [NADPH--hemoprotein reductase] + H2O + H(+). It catalyses the reaction 6alpha-hydroxycastasterone + reduced [NADPH--hemoprotein reductase] + O2 = castasterone + oxidized [NADPH--hemoprotein reductase] + 2 H2O + H(+). The catalysed reaction is 3-dehydro-6-deoxoteasterone + 2 reduced [NADPH--hemoprotein reductase] + 2 O2 = 3-dehydroteasterone + 2 oxidized [NADPH--hemoprotein reductase] + 3 H2O + 2 H(+). It carries out the reaction 6-deoxocastasterone + 2 reduced [NADPH--hemoprotein reductase] + 2 O2 = castasterone + 2 oxidized [NADPH--hemoprotein reductase] + 3 H2O + 2 H(+). The enzyme catalyses 6-deoxoteasterone + 2 reduced [NADPH--hemoprotein reductase] + 2 O2 = teasterone + 2 oxidized [NADPH--hemoprotein reductase] + 3 H2O + 2 H(+). It catalyses the reaction 6-deoxotyphasterol + 2 reduced [NADPH--hemoprotein reductase] + 2 O2 = typhasterol + 2 oxidized [NADPH--hemoprotein reductase] + 3 H2O + 2 H(+). It participates in plant hormone biosynthesis; brassinosteroid biosynthesis. Functionally, involved in reduction steps of the biosynthesis of plant campesterol-derivative steroids, ending to castasterone (CS) but missing brassinolide (BL). Catalyzes the C6-oxidation step in brassinosteroids biosynthesis; the conversion of 6-deoxoteasterone (6-deoxoTE) to teasterone (TE), 3-dehydro-6-deoxoteasterone (6-deoxo3DT, 6-deoxo-3-DHT) to 3-dehydroteasterone (3DT, 3-DHT), 6-deoxotyphasterol (6-deoxoTY) to typhasterol (TY) and of 6-deoxocastasterone (6-deoxoCS) to castasterone (CS). This is Cytochrome P450 85A1 from Brachypodium distachyon (Purple false brome).